The primary structure comprises 711 residues: Dendrin (711 aa).

Disordered regions lie at residues 1–22, 49–273, 324–446, and 479–677; these read MLDG…DEES, APSR…KKRL, DLNS…SQGL, and PSGV…AELS. Positions 75–84 are enriched in pro residues; it reads PGSPQPPPRR. Residues 102 to 134 adopt a coiled-coil conformation; that stretch reads LAEVRAREQEKRKAASQEREAKETERKRRKAGG. The segment covering 105–127 has biased composition (basic and acidic residues); that stretch reads VRAREQEKRKAASQEREAKETER. The interval 113–131 is nuclear localization; that stretch reads RKAASQEREAKETERKRRK. The segment covering 150–161 has biased composition (low complexity); sequence APRVAQLAGLPA. The interval 186-236 is interaction with MAGI2; it reads GSAWAGPWGGRRPGPPSYEAHLLLRGSAGTAPRRRWDRPPPYVAPPSYEGP. Low complexity-rich tracts occupy residues 252-262 and 346-356; these read PTSSAPAATPA and APAGSATAAPC. The segment at 341 to 436 is interaction with ACTN1; sequence AGTEIAPAGS…LEGWKATRRA (96 aa). Phosphoserine is present on Ser389. The interval 408-709 is interaction with CD2AP and NPHS1; it reads GGTGWRESLG…IRGTQQGNRK (302 aa). Positions 529 to 546 are enriched in basic and acidic residues; sequence GEAEGGRPGDSTLEERTF.

Forms a ternary complex with MAGI2 and SH3KBP1; recruits DDN to the cytoplasm. Interacts with MAGI1. Interacts with ACTN1 and may interact with WWC1. Interacts with the podocyte slit diaphragm proteins CD2AP, NPHS1 and NPHS2; the interaction with CD2AP and NPHS1 is direct. Specifically expressed in brain and kidney. Expressed in kidney glomerular capillary loops (at protein level).

It is found in the cell projection. The protein localises to the dendritic spine membrane. It localises to the cytoplasm. Its subcellular location is the endoplasmic reticulum membrane. The protein resides in the perikaryon. It is found in the nucleus. Its function is as follows. Promotes apoptosis of kidney glomerular podocytes. Podocytes are highly specialized cells essential to the ultrafiltration of blood, resulting in the extraction of urine and the retention of protein. The protein is Dendrin (DDN) of Homo sapiens (Human).